Here is a 351-residue protein sequence, read N- to C-terminus: DNA-directed RNA polymerase subunit alpha (351 aa).

The tract at residues 1–245 (MPRRNLLKGF…EHFTVFVNFD (245 aa)) is alpha N-terminal domain (alpha-NTD). Residues 261 to 351 (AVLELLNTKI…MRQKEEIDEA (91 aa)) are alpha C-terminal domain (alpha-CTD).

The protein belongs to the RNA polymerase alpha chain family. Homodimer. The RNAP catalytic core consists of 2 alpha, 1 beta, 1 beta' and 1 omega subunit. When a sigma factor is associated with the core the holoenzyme is formed, which can initiate transcription.

It carries out the reaction RNA(n) + a ribonucleoside 5'-triphosphate = RNA(n+1) + diphosphate. Functionally, DNA-dependent RNA polymerase catalyzes the transcription of DNA into RNA using the four ribonucleoside triphosphates as substrates. The polypeptide is DNA-directed RNA polymerase subunit alpha (Treponema pallidum (strain Nichols)).